The sequence spans 357 residues: DNA integrity scanning protein DisA (357 aa).

The region spanning 8–146 (VKSMINILQL…GNLRYTLKDI (139 aa)) is the DAC domain. ATP-binding positions include G75, L93, and 106 to 110 (MRHRT).

It belongs to the DisA family. In terms of assembly, homooctamer. Mg(2+) serves as cofactor.

It catalyses the reaction 2 ATP = 3',3'-c-di-AMP + 2 diphosphate. Participates in a DNA-damage check-point that is active prior to asymmetric division when DNA is damaged. DisA forms globular foci that rapidly scan along the chromosomes during sporulation, searching for lesions. When a lesion is present, DisA pauses at the lesion site. This triggers a cellular response that culminates in a temporary block in sporulation initiation. Its function is as follows. Also has diadenylate cyclase activity, catalyzing the condensation of 2 ATP molecules into cyclic di-AMP (c-di-AMP). c-di-AMP acts as a signaling molecule that couples DNA integrity with progression of sporulation. The rise in c-di-AMP level generated by DisA while scanning the chromosome, operates as a positive signal that advances sporulation; upon encountering a lesion, the DisA focus arrests at the damaged site and halts c-di-AMP synthesis. This is DNA integrity scanning protein DisA from Bacillus anthracis (strain CDC 684 / NRRL 3495).